A 140-amino-acid chain; its full sequence is MLMPKKVKHRKQMKGRMSGTPQRGVSLAFGDYGLQATECGWLDSRQIEAARIAMNRYIKRGGKIWIRIFPDKPLTAKPAETRMGKGKGSPDSWVCVIKPGRILYEMEGVTEEVAREAFRLAAHKLPIPTKFTSRKDANEG.

Over residues 1 to 14 (MLMPKKVKHRKQMK) the composition is skewed to basic residues. Residues 1 to 20 (MLMPKKVKHRKQMKGRMSGT) form a disordered region.

The protein belongs to the universal ribosomal protein uL16 family. In terms of assembly, part of the 50S ribosomal subunit.

Its function is as follows. Binds 23S rRNA and is also seen to make contacts with the A and possibly P site tRNAs. This is Large ribosomal subunit protein uL16 from Geotalea daltonii (strain DSM 22248 / JCM 15807 / FRC-32) (Geobacter daltonii).